Reading from the N-terminus, the 430-residue chain is Adenylosuccinate synthetase (430 aa).

Residues 12–18 (GDEGKGK) and 40–42 (GHT) contribute to the GTP site. The active-site Proton acceptor is Asp13. Mg(2+) is bound by residues Asp13 and Gly40. IMP is bound by residues 13 to 16 (DEGK), 38 to 41 (NAGH), Thr130, Arg144, Gln224, Thr239, and Arg303. His41 serves as the catalytic Proton donor. Residue 299–305 (VNTGRKR) coordinates substrate. GTP is bound by residues Arg305, 331–333 (KLD), and 413–415 (STS).

Belongs to the adenylosuccinate synthetase family. As to quaternary structure, homodimer. The cofactor is Mg(2+).

It localises to the cytoplasm. It carries out the reaction IMP + L-aspartate + GTP = N(6)-(1,2-dicarboxyethyl)-AMP + GDP + phosphate + 2 H(+). Its pathway is purine metabolism; AMP biosynthesis via de novo pathway; AMP from IMP: step 1/2. In terms of biological role, plays an important role in the de novo pathway of purine nucleotide biosynthesis. Catalyzes the first committed step in the biosynthesis of AMP from IMP. This is Adenylosuccinate synthetase from Nitrobacter winogradskyi (strain ATCC 25391 / DSM 10237 / CIP 104748 / NCIMB 11846 / Nb-255).